The primary structure comprises 120 residues: Seminal plasma protein HSP-1 (120 aa).

2 tandem repeats follow at residues 1–13 and 16–28. A 2 X approximate repeats region spans residues 1 to 28; sequence DLQTTGADHSATVNPDQQLIMTKHSATV. 4 O-linked (GalNAc...) threonine glycosylation sites follow: Thr-5, Thr-12, Thr-22, and Thr-27. 2 Fibronectin type-II domains span residues 29 to 73 and 74 to 120; these read TPEN…YCAA and TDYA…WKYC. 4 disulfides stabilise this stretch: Cys-34–Cys-58, Cys-48–Cys-71, Cys-79–Cys-105, and Cys-93–Cys-120.

This sequence belongs to the seminal plasma protein family. One glycoform exists as a monomer while the other forms a heterotetramer with HSP-2 and binds heparin. Post-translationally, O-glycosylated on Thr. There are two forms of HSP-1 which probably differ in the amount of sialylation of polysaccharide. As to expression, major component of seminal plasma.

The protein resides in the secreted. Functionally, could enhance the fertilizing capacity of spermatozoa upon interaction with heparin-like glycosaminoglycans present in the female genital tract. This is Seminal plasma protein HSP-1 from Equus caballus (Horse).